The chain runs to 97 residues: Putative septation protein SpoVG (97 aa).

This sequence belongs to the SpoVG family.

Its function is as follows. Could be involved in septation. This is Putative septation protein SpoVG from Borreliella burgdorferi (strain ATCC 35210 / DSM 4680 / CIP 102532 / B31) (Borrelia burgdorferi).